We begin with the raw amino-acid sequence, 312 residues long: Coproporphyrin III ferrochelatase (312 aa).

Residues Tyr-13, Arg-30, 46 to 47, Ser-54, and Tyr-125 contribute to the Fe-coproporphyrin III site; that span reads RY. Positions 182 and 263 each coordinate Fe(2+).

The protein belongs to the ferrochelatase family.

It localises to the cytoplasm. The catalysed reaction is Fe-coproporphyrin III + 2 H(+) = coproporphyrin III + Fe(2+). It participates in porphyrin-containing compound metabolism; protoheme biosynthesis. Its function is as follows. Involved in coproporphyrin-dependent heme b biosynthesis. Catalyzes the insertion of ferrous iron into coproporphyrin III to form Fe-coproporphyrin III. The chain is Coproporphyrin III ferrochelatase from Oceanobacillus iheyensis (strain DSM 14371 / CIP 107618 / JCM 11309 / KCTC 3954 / HTE831).